Consider the following 456-residue polypeptide: Adenylosuccinate lyase (456 aa).

Residues 15 to 16, 90 to 92, and 122 to 123 contribute to the N(6)-(1,2-dicarboxyethyl)-AMP site; these read RY, NHD, and TS. Residue histidine 171 is the Proton donor/acceptor of the active site. Glutamine 247 is a binding site for N(6)-(1,2-dicarboxyethyl)-AMP. Residue serine 295 is the Proton donor/acceptor of the active site. N(6)-(1,2-dicarboxyethyl)-AMP-binding positions include serine 296, 301–303, asparagine 309, arginine 335, and 340–344; these read KVN and STVLR.

The protein belongs to the lyase 1 family. Adenylosuccinate lyase subfamily. Homotetramer. Residues from neighboring subunits contribute catalytic and substrate-binding residues to each active site.

It carries out the reaction N(6)-(1,2-dicarboxyethyl)-AMP = fumarate + AMP. It catalyses the reaction (2S)-2-[5-amino-1-(5-phospho-beta-D-ribosyl)imidazole-4-carboxamido]succinate = 5-amino-1-(5-phospho-beta-D-ribosyl)imidazole-4-carboxamide + fumarate. It functions in the pathway purine metabolism; AMP biosynthesis via de novo pathway; AMP from IMP: step 2/2. Its pathway is purine metabolism; IMP biosynthesis via de novo pathway; 5-amino-1-(5-phospho-D-ribosyl)imidazole-4-carboxamide from 5-amino-1-(5-phospho-D-ribosyl)imidazole-4-carboxylate: step 2/2. Catalyzes two reactions in de novo purine nucleotide biosynthesis. Catalyzes the breakdown of 5-aminoimidazole- (N-succinylocarboxamide) ribotide (SAICAR or 2-[5-amino-1-(5-phospho-beta-D-ribosyl)imidazole-4-carboxamido]succinate) to 5-aminoimidazole-4-carboxamide ribotide (AICAR or 5-amino-1-(5-phospho-beta-D-ribosyl)imidazole-4-carboxamide) and fumarate, and of adenylosuccinate (ADS or N(6)-(1,2-dicarboxyethyl)-AMP) to adenosine monophosphate (AMP) and fumarate. The chain is Adenylosuccinate lyase (purB) from Buchnera aphidicola subsp. Acyrthosiphon pisum (strain APS) (Acyrthosiphon pisum symbiotic bacterium).